We begin with the raw amino-acid sequence, 180 residues long: UPF0397 protein SSA_0592 (180 aa).

5 consecutive transmembrane segments (helical) span residues 9–29, 45–65, 72–92, 113–133, and 146–166; these read VVATGIGAALFVVIGMINIPT, LFSVIFGPIVGFLMGFIGHAI, GGLWWFWIAGSGVFGLLVGFF, LIQFGANAIAWLIGPIGDVIV, and IVAILVNSATVAVIGTVLLTA.

The protein belongs to the UPF0397 family.

The protein localises to the cell membrane. This Streptococcus sanguinis (strain SK36) protein is UPF0397 protein SSA_0592.